Reading from the N-terminus, the 282-residue chain is Pantothenate synthetase (282 aa).

30 to 37 (MGFLHDGH) is a binding site for ATP. The active-site Proton donor is the H37. Q60 is a (R)-pantoate binding site. Q60 is a binding site for beta-alanine. Residue 146–149 (GQKD) coordinates ATP. Q152 contacts (R)-pantoate. Residues I175 and 183-186 (KSSR) contribute to the ATP site.

This sequence belongs to the pantothenate synthetase family. Homodimer.

It localises to the cytoplasm. It carries out the reaction (R)-pantoate + beta-alanine + ATP = (R)-pantothenate + AMP + diphosphate + H(+). It participates in cofactor biosynthesis; (R)-pantothenate biosynthesis; (R)-pantothenate from (R)-pantoate and beta-alanine: step 1/1. Functionally, catalyzes the condensation of pantoate with beta-alanine in an ATP-dependent reaction via a pantoyl-adenylate intermediate. In Campylobacter jejuni (strain RM1221), this protein is Pantothenate synthetase.